A 449-amino-acid chain; its full sequence is Kynurenine 3-monooxygenase (449 aa).

It belongs to the aromatic-ring hydroxylase family. KMO subfamily. FAD serves as cofactor.

The enzyme catalyses L-kynurenine + NADPH + O2 + H(+) = 3-hydroxy-L-kynurenine + NADP(+) + H2O. The protein operates within cofactor biosynthesis; NAD(+) biosynthesis; quinolinate from L-kynurenine: step 1/3. In terms of biological role, catalyzes the hydroxylation of L-kynurenine (L-Kyn) to form 3-hydroxy-L-kynurenine (L-3OHKyn). Required for synthesis of quinolinic acid. The protein is Kynurenine 3-monooxygenase of Cytophaga hutchinsonii (strain ATCC 33406 / DSM 1761 / CIP 103989 / NBRC 15051 / NCIMB 9469 / D465).